Here is a 207-residue protein sequence, read N- to C-terminus: Na(+)-translocating ferredoxin:NAD(+) oxidoreductase complex subunit G (207 aa).

Residues 18–38 (GLILFVISAVAACALALTNYV) traverse the membrane as a helical segment. At T185 the chain carries FMN phosphoryl threonine.

Belongs to the RnfG family. In terms of assembly, the complex is composed of six subunits: RnfA, RnfB, RnfC, RnfD, RnfE and RnfG. The cofactor is FMN.

It is found in the cell membrane. The catalysed reaction is 2 reduced [2Fe-2S]-[ferredoxin] + Na(+)(in) + NAD(+) + H(+) = 2 oxidized [2Fe-2S]-[ferredoxin] + Na(+)(out) + NADH. Its function is as follows. Part of a membrane-bound complex that couples electron transfer with translocation of ions across the membrane. Couples electron transfer from reduced ferredoxin to NAD(+) with electrogenic movement of Na(+) out of the cell. Involved in caffeate respiration. The sequence is that of Na(+)-translocating ferredoxin:NAD(+) oxidoreductase complex subunit G from Acetobacterium woodii (strain ATCC 29683 / DSM 1030 / JCM 2381 / KCTC 1655 / WB1).